Consider the following 207-residue polypeptide: MGLKNKIIKIYELNEEERKKVLEFLKKEILNGKIVICGTDTLYGISANALNEKAVRKVYNIKRREFNKPLSICVRDKNEIEKYAYVNDLAKKIIDKFLPGPLTIILKKKPGIPDIVAKDYIGIRIPDEPIIRELSIVPLTTTSANISGKESPTTVDEIDKEVLKKVDYVIDIGKCKYSKPSTIIKIEDDKIISIREGVIPIQKLARC.

Residues 15–199 (EEERKKVLEF…KIISIREGVI (185 aa)) form the YrdC-like domain.

This sequence belongs to the SUA5 family.

Its subcellular location is the cytoplasm. The enzyme catalyses L-threonine + hydrogencarbonate + ATP = L-threonylcarbamoyladenylate + diphosphate + H2O. Functionally, required for the formation of a threonylcarbamoyl group on adenosine at position 37 (t(6)A37) in tRNAs that read codons beginning with adenine. Catalyzes the conversion of L-threonine, HCO(3)(-)/CO(2) and ATP to give threonylcarbamoyl-AMP (TC-AMP) as the acyladenylate intermediate, with the release of diphosphate. This is Putative threonylcarbamoyl-AMP synthase from Methanocaldococcus jannaschii (strain ATCC 43067 / DSM 2661 / JAL-1 / JCM 10045 / NBRC 100440) (Methanococcus jannaschii).